Reading from the N-terminus, the 163-residue chain is Lipoprotein signal peptidase (163 aa).

4 consecutive transmembrane segments (helical) span residues 5–25 (VLTF…TKSL), 37–57 (IIPG…FGML), 67–87 (LMLV…VFKS), and 91–111 (LSNL…GNLY). Active-site residues include aspartate 121 and aspartate 139. The helical transmembrane segment at 132 to 152 (WPAFNVADASITIGIALFIGY) threads the bilayer.

This sequence belongs to the peptidase A8 family.

The protein resides in the cell inner membrane. The enzyme catalyses Release of signal peptides from bacterial membrane prolipoproteins. Hydrolyzes -Xaa-Yaa-Zaa-|-(S,diacylglyceryl)Cys-, in which Xaa is hydrophobic (preferably Leu), and Yaa (Ala or Ser) and Zaa (Gly or Ala) have small, neutral side chains.. It functions in the pathway protein modification; lipoprotein biosynthesis (signal peptide cleavage). This protein specifically catalyzes the removal of signal peptides from prolipoproteins. The chain is Lipoprotein signal peptidase from Sulfurihydrogenibium sp. (strain YO3AOP1).